We begin with the raw amino-acid sequence, 118 residues long: Ribosome-binding factor A (118 aa).

This sequence belongs to the RbfA family. In terms of assembly, monomer. Binds 30S ribosomal subunits, but not 50S ribosomal subunits or 70S ribosomes.

Its subcellular location is the cytoplasm. Functionally, one of several proteins that assist in the late maturation steps of the functional core of the 30S ribosomal subunit. Associates with free 30S ribosomal subunits (but not with 30S subunits that are part of 70S ribosomes or polysomes). Required for efficient processing of 16S rRNA. May interact with the 5'-terminal helix region of 16S rRNA. This is Ribosome-binding factor A from Geobacter sulfurreducens (strain ATCC 51573 / DSM 12127 / PCA).